A 203-amino-acid polypeptide reads, in one-letter code: Cardiotrophin-2 (203 aa).

Residues 1-21 (MSCSLARLCLLTLLSPPLSSA) form the signal peptide. An N-linked (GlcNAc...) asparagine glycan is attached at N43.

It belongs to the IL-6 superfamily.

The protein resides in the secreted. Its function is as follows. May have an important role in neuronal precursor development and maturation. This chain is Cardiotrophin-2 (CTF2), found in Pan troglodytes (Chimpanzee).